The primary structure comprises 148 residues: Putative nickel-responsive regulator (148 aa).

4 residues coordinate Ni(2+): His88, His99, His101, and Cys107.

The protein belongs to the transcriptional regulatory CopG/NikR family. Ni(2+) serves as cofactor.

Functionally, transcriptional regulator. The polypeptide is Putative nickel-responsive regulator (Helicobacter acinonychis (strain Sheeba)).